A 952-amino-acid polypeptide reads, in one-letter code: Bifunctional ent-kaurene synthase (952 aa).

The DXDD B-type cyclization motif motif lies at 328-331; it reads DVDD. Mg(2+)-binding residues include Asp668, Glu672, Asn848, Asp849, Ser852, and Asp856. The short motif at 668–672 is the DEXXE A-type cyclization motif element; that stretch reads DEYME.

The protein belongs to the terpene synthase family. It depends on Mg(2+) as a cofactor.

The catalysed reaction is ent-copalyl diphosphate = ent-kaur-16-ene + diphosphate. It carries out the reaction (2E,6E,10E)-geranylgeranyl diphosphate = ent-copalyl diphosphate. It participates in plant hormone biosynthesis; gibberellin biosynthesis. In terms of biological role, bifunctional ent-kaurene synthase; part of the gene cluster that mediates the biosynthesis of gibberellins (GAs), diterpenoids that may provide a selective advantage during infection of the preferred host plant, rice. Gibberellins (GAs) are diterpenoids and are synthesized via the mevalonate pathway. Biosynthesis of the major metabolite GA3 (gibberellic acid) from geranylgeranyl diphosphate (GGPP) requires 13 steps. The GGPP produced by the geranylgeranyl diphosphate synthase GGS2 is converted to ent-kaurene via ent-copalyldiphosphate in a two-step cyclization reaction performed by the bifunctional ent-copalyl diphosphate synthase/ent-kaurene synthase enzyme (CPS/KS). Ent-Kaurene is metabolized to GAs by a series of oxidation reactions catalyzed by cytochrome P450 monooxygenases. Cytochrome P450 monooxygenase P450-4 is an ent-kaurene oxidase that catalyzes the three oxidation steps between ent-kaurene and ent-kaurenoic acid. The highly multifunctional cytochrome P450 monooxygenase P450-1 then catalyzes four steps involving oxidation at two carbon atoms, in the main pathway from ent-kaurenoic acid to GA14 via GA12-aldehyde as well as producing kaurenolides and fujenoic acids as by-products. The cytochrome P450 monooxygenase P450-2 then converts GA14 to GA4 by removal of C-20. GA4 is further converted to GA7 by the GA4 desaturase DES via 1,2-desaturation before cytochrome P450 monooxygenase P450-3, a 13-hydroxylase, hydroxylates GA7 to GA3, the final product of the GA-biosynthetic pathway. This Gibberella fujikuroi (strain CBS 195.34 / IMI 58289 / NRRL A-6831) (Bakanae and foot rot disease fungus) protein is Bifunctional ent-kaurene synthase.